The chain runs to 76 residues: Acyl carrier protein (76 aa).

Residues 1–76 (MDTFESVKAV…DVVAYIEANK (76 aa)) enclose the Carrier domain. S36 is subject to O-(pantetheine 4'-phosphoryl)serine.

It belongs to the acyl carrier protein (ACP) family. In terms of processing, 4'-phosphopantetheine is transferred from CoA to a specific serine of apo-ACP by AcpS. This modification is essential for activity because fatty acids are bound in thioester linkage to the sulfhydryl of the prosthetic group.

It localises to the cytoplasm. The protein operates within lipid metabolism; fatty acid biosynthesis. Functionally, carrier of the growing fatty acid chain in fatty acid biosynthesis. This is Acyl carrier protein from Helicobacter hepaticus (strain ATCC 51449 / 3B1).